The chain runs to 265 residues: DNA-binding dual transcriptional regulator Rns (265 aa).

Decanoate is bound by residues His20 and Arg75. Residues 164–261 (DKVRNLIEKD…GVTPKQFFTY (98 aa)) enclose the HTH araC/xylS-type domain. 2 DNA-binding regions (H-T-H motif) span residues 181–202 (GIIA…ESEN) and 228–251 (ISQI…NKHY).

In terms of assembly, homodimer; each subunit binds one decanoate molecule.

The protein resides in the cytoplasm. With respect to regulation, rns-dependent expression of pilins and outer membrane proteins CexE-alpha and CexE-epsilon are inhibited in vivo by decanoic acid (decanoate); has no effect on expression of DnaK or flagellins. Decanoate relieves Rns-dependent repression of nlpA. A transcription factor required for the expression of the CS1 and CS2 adhesins of enterotoxigenic E.coli. Required for expression of pilins and some outer membrane lipoproteins. Represses expression of nlpA. This is DNA-binding dual transcriptional regulator Rns from Escherichia coli.